The primary structure comprises 289 residues: uncharacterized protein (289 aa).

This is an uncharacterized protein from Drosophila melanogaster (Fruit fly).